A 264-amino-acid polypeptide reads, in one-letter code: NAD kinase (264 aa).

The active-site Proton acceptor is Asp45. NAD(+) contacts are provided by residues 45-46 (DG), His50, 121-122 (NE), Arg147, Asp149, Ala184, and Gln224.

It belongs to the NAD kinase family. It depends on a divalent metal cation as a cofactor.

The protein resides in the cytoplasm. It carries out the reaction NAD(+) + ATP = ADP + NADP(+) + H(+). Its function is as follows. Involved in the regulation of the intracellular balance of NAD and NADP, and is a key enzyme in the biosynthesis of NADP. Catalyzes specifically the phosphorylation on 2'-hydroxyl of the adenosine moiety of NAD to yield NADP. This Lysinibacillus sphaericus (strain C3-41) protein is NAD kinase.